A 99-amino-acid polypeptide reads, in one-letter code: Malonate decarboxylase acyl carrier protein (99 aa).

S25 is subject to O-(phosphoribosyl dephospho-coenzyme A)serine.

The protein belongs to the MdcC family. Post-translationally, covalently binds the prosthetic group of malonate decarboxylase.

The protein resides in the cytoplasm. Its function is as follows. Subunit of malonate decarboxylase, it is an acyl carrier protein to which acetyl and malonyl thioester residues are bound via a 2'-(5''-phosphoribosyl)-3'-dephospho-CoA prosthetic group and turn over during the catalytic mechanism. This Azotobacter vinelandii (strain DJ / ATCC BAA-1303) protein is Malonate decarboxylase acyl carrier protein.